Here is a 263-residue protein sequence, read N- to C-terminus: Putative cysteine-rich repeat secretory protein 31 (263 aa).

An N-terminal signal peptide occupies residues 1–32; sequence MHNSYSLSKRLVLVLFLAVVATQLFLIRNVSS. Gnk2-homologous domains are found at residues 39-141 and 146-260; these read YLHH…AIEV and YDNN…FYPF.

It belongs to the cysteine-rich repeat secretory protein family.

The protein localises to the secreted. The polypeptide is Putative cysteine-rich repeat secretory protein 31 (CRRSP31) (Arabidopsis thaliana (Mouse-ear cress)).